The following is an 811-amino-acid chain: Endothelin-converting enzyme 2 (811 aa).

Residues 1–106 (MNVALQELGA…QLLGSRTQLE (106 aa)) lie on the Cytoplasmic side of the membrane. Residues 22–64 (LRDEDAPETPVEGGASPDAMEVGKGASPFSPGPSPGMTPGTPR) form a disordered region. A helical; Signal-anchor for type II membrane protein membrane pass occupies residues 107-127 (LVLAGASLLLAALLLGCLVAL). At 128 to 811 (GVQYHRDPSH…MNPGQLCEVW (684 aa)) the chain is on the lumenal side. One can recognise a Peptidase M13 domain in the interval 139–811 (TCLTEACIRV…MNPGQLCEVW (673 aa)). Cystine bridges form between Cys140–Cys145, Cys163–Cys796, Cys171–Cys756, Cys227–Cys476, and Cys685–Cys808. 7 N-linked (GlcNAc...) asparagine glycosylation sites follow: Asn207, Asn211, Asn252, Asn312, Asn357, Asn424, and Asn580. Zn(2+) is bound at residue His648. Glu649 is an active-site residue. His652 contributes to the Zn(2+) binding site. Asn673 and Asn681 each carry an N-linked (GlcNAc...) asparagine glycan. Residue Glu708 coordinates Zn(2+). Asp712 acts as the Proton donor in catalysis.

This sequence belongs to the peptidase M13 family. The cofactor is Zn(2+).

It localises to the golgi apparatus membrane. The protein resides in the cytoplasmic vesicle. The protein localises to the secretory vesicle membrane. The enzyme catalyses Hydrolysis of the 21-Trp-|-Val-22 bond in big endothelin to form endothelin 1.. Functionally, converts big endothelin-1 to endothelin-1. Also involved in the processing of various neuroendocrine peptides, including neurotensin, angiotensin I, substance P, proenkephalin-derived peptides, and prodynorphin-derived peptides. May play a role in amyloid-beta processing. The sequence is that of Endothelin-converting enzyme 2 from Homo sapiens (Human).